A 79-amino-acid chain; its full sequence is Small ribosomal subunit protein bS18 (79 aa).

Belongs to the bacterial ribosomal protein bS18 family. As to quaternary structure, part of the 30S ribosomal subunit. Forms a tight heterodimer with protein bS6.

Functionally, binds as a heterodimer with protein bS6 to the central domain of the 16S rRNA, where it helps stabilize the platform of the 30S subunit. This Aster yellows witches'-broom phytoplasma (strain AYWB) protein is Small ribosomal subunit protein bS18.